A 438-amino-acid chain; its full sequence is Gamma-glutamyl phosphate reductase (438 aa).

The segment at 1 to 21 is disordered; that stretch reads MTAQTSSDVTDQKTDLTRESE. The segment covering 10–21 has biased composition (basic and acidic residues); the sequence is TDQKTDLTRESE.

The protein belongs to the gamma-glutamyl phosphate reductase family.

The protein resides in the cytoplasm. It carries out the reaction L-glutamate 5-semialdehyde + phosphate + NADP(+) = L-glutamyl 5-phosphate + NADPH + H(+). It functions in the pathway amino-acid biosynthesis; L-proline biosynthesis; L-glutamate 5-semialdehyde from L-glutamate: step 2/2. Its function is as follows. Catalyzes the NADPH-dependent reduction of L-glutamate 5-phosphate into L-glutamate 5-semialdehyde and phosphate. The product spontaneously undergoes cyclization to form 1-pyrroline-5-carboxylate. This Corynebacterium efficiens (strain DSM 44549 / YS-314 / AJ 12310 / JCM 11189 / NBRC 100395) protein is Gamma-glutamyl phosphate reductase.